The chain runs to 233 residues: RNA/RNP complex-1-interacting phosphatase homolog (233 aa).

Residues 1 to 14 show a composition bias toward basic residues; the sequence is MSNYHHNHNYQHRP. The disordered stretch occupies residues 1–21; the sequence is MSNYHHNHNYQHRPRGYERLP. The region spanning 34-206 is the Tyrosine-protein phosphatase domain; it reads NVGRDIDGTR…LYEAERKKKY (173 aa). Cys-150 acts as the Phosphocysteine intermediate in catalysis. 151 to 156 is a substrate binding site; it reads THGLNR. Arg-156 acts as the Proton donor/acceptor in catalysis. Positions 204–233 are disordered; sequence KKYGKSSGKSSGNSADSTISSEQLHRNNSQ. Positions 208 to 217 are enriched in low complexity; that stretch reads KSSGKSSGNS. Over residues 218–233 the composition is skewed to polar residues; the sequence is ADSTISSEQLHRNNSQ.

This sequence belongs to the protein-tyrosine phosphatase family. Non-receptor class dual specificity subfamily. As to quaternary structure, interacts with the ERI/DICER complex component dcr-1. Interacts with ERI/DICER complex components rrf-3 and isoform b of eri-1. Interacts with drh-3 and rde-8.

The protein resides in the cytoplasm. It localises to the nucleus. In terms of biological role, RNA polyphosphatase which has RNA 5'-triphosphatase and diphosphatase activities. Displays poor protein-tyrosine phosphatase activity. Binds to 5'-triphosphorylated RNAs (also called ppp-RNAs). Dephosphorylates ppp-RNAs converting them to 5'-monophosphorylated RNAs (also called p-RNAs). During small-RNA-mediated gene-silencing or RNA interference (RNAi), involved in the dcr-1-mediated processing of an amplified dsRNA intermediate. This is most likely in association with several components of the ERI/DICER complex including dcr-1, eri-1 and rrf-3. Plays a role in the biogenesis of 26G small interfering RNAs (26G-siRNAs), which are a class of 26 nucleotide siRNAs that possess a guanine residue at the 5'-end, by dephosphorylating 5'-triphosphorylated 26G-siRNAs prior to their maturation by the ERI/DICER complex. Plays a role in the biogenesis of csr-1-bound 22G small interfering RNAs (22G-siRNAs), which are a class of 22 nucleotide siRNAs that possess a guanine residue at the 5'-end. Not required for the biogenesis of microRNAs (miRNA) or for the biogenesis of a class of 21 nucleotide PIWI-interacting RNAs (piRNAs) that possess a uracil residue at the 5'-end (also called 21U-RNAs). In Caenorhabditis elegans, this protein is RNA/RNP complex-1-interacting phosphatase homolog.